The following is a 367-amino-acid chain: Dihydroxyacetone phosphate transaminase Cj1437c (367 aa).

N6-(pyridoxal phosphate)lysine is present on Lys-219.

It belongs to the class-II pyridoxal-phosphate-dependent aminotransferase family. The cofactor is pyridoxal 5'-phosphate.

It carries out the reaction dihydroxyacetone phosphate + L-glutamate = (S)-serinol phosphate + 2-oxoglutarate. It functions in the pathway capsule biogenesis; capsule polysaccharide biosynthesis. Functionally, pyridoxal phosphate (PLP)-dependent transaminase involved in the biosynthesis of amidated D-glucuronic acid structures found on the capsular polysaccharide (CPS) of C.jejuni. Catalyzes the transamination of dihydroxyacetone phosphate (DHAP) to (S)-serinol phosphate in the presence of L-glutamate. Less active with L-aspartate. No activity with dihydroxyacetone or L-alanine. This Campylobacter jejuni subsp. jejuni serotype O:2 (strain ATCC 700819 / NCTC 11168) protein is Dihydroxyacetone phosphate transaminase Cj1437c.